The sequence spans 311 residues: Protoheme IX farnesyltransferase 1 (311 aa).

Transmembrane regions (helical) follow at residues Val31–Asn51, Pro52–Leu72, Val97–Leu117, Val119–Ile139, Ile152–Gly172, Leu179–Phe199, Ile225–Thr245, Gly247–Val267, and Leu281–Ile301.

Belongs to the UbiA prenyltransferase family. Protoheme IX farnesyltransferase subfamily.

Its subcellular location is the cell inner membrane. The catalysed reaction is heme b + (2E,6E)-farnesyl diphosphate + H2O = Fe(II)-heme o + diphosphate. It functions in the pathway porphyrin-containing compound metabolism; heme O biosynthesis; heme O from protoheme: step 1/1. Converts heme B (protoheme IX) to heme O by substitution of the vinyl group on carbon 2 of heme B porphyrin ring with a hydroxyethyl farnesyl side group. This Mesorhizobium japonicum (strain LMG 29417 / CECT 9101 / MAFF 303099) (Mesorhizobium loti (strain MAFF 303099)) protein is Protoheme IX farnesyltransferase 1.